Reading from the N-terminus, the 386-residue chain is 5-hydroxytryptamine receptor 1B (386 aa).

Residues 1–42 (MEEQGIQCAPPPPAASQTGVPLTNLSHNCSADGYIYQDSIAL) are Extracellular-facing. 2 N-linked (GlcNAc...) asparagine glycosylation sites follow: Asn24 and Asn28. The chain crosses the membrane as a helical span at residues 43-68 (PWKVLLVALLALITLATTLSNAFVIA). The Cytoplasmic portion of the chain corresponds to 69–82 (TVYRTRKLHTPANY). A helical transmembrane segment spans residues 83–107 (LIASLAVTDLLVSILVMPISTMYTV). Residues 108-115 (TGRWTLGQ) are Extracellular-facing. A helical transmembrane segment spans residues 116–141 (VVCDFWLSSDITCCTASIMHLCVIAL). A disulfide bridge connects residues Cys118 and Cys195. Ergotamine-binding residues include Asp125 and Thr130. The DRY motif; important for ligand-induced conformation changes and signaling signature appears at 142 to 144 (DRY). Residues 142–161 (DRYWAITDAVEYSAKRTPKR) lie on the Cytoplasmic side of the membrane. A helical transmembrane segment spans residues 162–180 (AAIMIVLVWVFSISISLPP). Residues 181–201 (FFWRQAKAEEEMLDCFVNTDH) lie on the Extracellular side of the membrane. Position 197 (Val197) interacts with ergotamine. A helical membrane pass occupies residues 202-225 (VLYTVYSTVGAFYLPTLLLIALYG). The Cytoplasmic segment spans residues 226–311 (RIYVEARSRI…AARERKATKT (86 aa)). Positions 255–268 (DSPGSTSSVTSINS) are enriched in polar residues. The disordered stretch occupies residues 255–278 (DSPGSTSSVTSINSRAPDVPSESG). Residues 312-333 (LGIILGAFIVCWLPFFIISLVM) form a helical membrane-spanning segment. Over 334–343 (PICKDACWFH) the chain is Extracellular. The helical transmembrane segment at 344 to 366 (MAIFDFFNWLGYLNSLINPIIYT) threads the bilayer. Positions 361-365 (NPIIY) match the NPxxY motif; important for ligand-induced conformation changes and signaling motif. Residues 367–386 (MSNEDFKQAFHKLIRFKCAG) lie on the Cytoplasmic side of the membrane. Residue Cys384 is the site of S-palmitoyl cysteine attachment.

The protein belongs to the G-protein coupled receptor 1 family. In terms of assembly, homodimer. Heterodimer with HTR1D. Post-translationally, phosphorylated. Desensitization of the receptor may be mediated by its phosphorylation. Palmitoylated. As to expression, predominantly expressed in striatum and Purkinje cells.

The protein resides in the cell membrane. Functionally, G-protein coupled receptor for 5-hydroxytryptamine (serotonin). Also functions as a receptor for ergot alkaloid derivatives, various anxiolytic and antidepressant drugs and other psychoactive substances, such as lysergic acid diethylamide (LSD). Ligand binding causes a conformation change that triggers signaling via guanine nucleotide-binding proteins (G proteins) and modulates the activity of downstream effectors, such as adenylate cyclase. HTR1B is coupled to G(i)/G(o) G alpha proteins and mediates inhibitory neurotransmission by inhibiting adenylate cyclase activity. Arrestin family members inhibit signaling via G proteins and mediate activation of alternative signaling pathways. Regulates the release of 5-hydroxytryptamine, dopamine and acetylcholine in the brain, and thereby affects neural activity, nociceptive processing, pain perception, mood and behavior. Besides, plays a role in vasoconstriction of cerebral arteries. The polypeptide is 5-hydroxytryptamine receptor 1B (Htr1b) (Mus musculus (Mouse)).